Reading from the N-terminus, the 347-residue chain is Adenine deaminase (347 aa).

Zn(2+) is bound by residues H16, H18, and H204. Catalysis depends on E207, which acts as the Proton donor. Zn(2+) is bound at residue D285. D286 contributes to the substrate binding site.

This sequence belongs to the metallo-dependent hydrolases superfamily. Adenosine and AMP deaminases family. Adenine deaminase type 2 subfamily. Zn(2+) is required as a cofactor. Post-translationally, probably ubiquitinated when cells enter quiescence in response to nutrient limitation, since it is specifically degraded via a process requiring the F-box protein SAF1 and components of the SKP1-Cullin-F-box complex.

The protein resides in the cytoplasm. It localises to the nucleus. The catalysed reaction is adenine + H2O + H(+) = hypoxanthine + NH4(+). Its function is as follows. Catalyzes the hydrolytic deamination of adenine to hypoxanthine. Plays an important role in the purine salvage pathway and in nitrogen catabolism. Also exhibits a low activity towards N(6)-substituted adenines that are commonly known as the plant hormones cytokinins. The chain is Adenine deaminase from Saccharomyces cerevisiae (strain ATCC 204508 / S288c) (Baker's yeast).